The sequence spans 314 residues: Probable cell division protein WhiA (314 aa).

A DNA-binding region (H-T-H motif) is located at residues 275-309 (SLKELGELVTSGAISKSGVNHRLKKIDEFAEKIKR).

Belongs to the WhiA family.

In terms of biological role, involved in cell division and chromosome segregation. This chain is Probable cell division protein WhiA, found in Oceanobacillus iheyensis (strain DSM 14371 / CIP 107618 / JCM 11309 / KCTC 3954 / HTE831).